Reading from the N-terminus, the 385-residue chain is Trehalose-phosphate phosphatase A (385 aa).

Residues 1–21 (MDMKSGHSSPVMTDSPPISNS) form a disordered region.

Belongs to the trehalose phosphatase family. Requires a divalent metal cation as cofactor. In terms of tissue distribution, expressed in flowers.

The catalysed reaction is alpha,alpha-trehalose 6-phosphate + H2O = alpha,alpha-trehalose + phosphate. It functions in the pathway glycan biosynthesis; trehalose biosynthesis. Functionally, removes the phosphate from trehalose 6-phosphate to produce free trehalose. Trehalose accumulation in plant may improve abiotic stress tolerance. In Arabidopsis thaliana (Mouse-ear cress), this protein is Trehalose-phosphate phosphatase A (TPPA).